A 490-amino-acid chain; its full sequence is Adenylosuccinate synthetase, chloroplastic (490 aa).

A chloroplast-targeting transit peptide spans 1–45; the sequence is MSLSSLTLDSNPRFAVGGPYHRRYPPLHHPRSFVSCSAKRPAVSA. Residue Ser46 is modified to N-acetylserine. GTP contacts are provided by residues 77-83 and 105-107; these read GDEGKGK and GHT. Catalysis depends on Asp78, which acts as the Proton acceptor. Residues Asp78 and Gly105 each contribute to the Mg(2+) site. Residues 78–81, 103–106, Thr195, Arg209, Gln289, Thr304, and Arg368 contribute to the IMP site; these read DEGK and NAGH. His106 functions as the Proton donor in the catalytic mechanism. 364–370 is a substrate binding site; it reads TTTGRPR. Residues Arg370, 396 to 398, and 479 to 481 each bind GTP; these read KLD and GIG.

Belongs to the adenylosuccinate synthetase family. Homodimer. Requires Mg(2+) as cofactor.

It localises to the plastid. Its subcellular location is the chloroplast. The catalysed reaction is IMP + L-aspartate + GTP = N(6)-(1,2-dicarboxyethyl)-AMP + GDP + phosphate + 2 H(+). It functions in the pathway purine metabolism; AMP biosynthesis via de novo pathway; AMP from IMP: step 1/2. Its function is as follows. Plays an important role in the de novo pathway and in the salvage pathway of purine nucleotide biosynthesis. Catalyzes the first committed step in the biosynthesis of AMP from IMP. The sequence is that of Adenylosuccinate synthetase, chloroplastic from Arabidopsis thaliana (Mouse-ear cress).